We begin with the raw amino-acid sequence, 151 residues long: MTNDIKEIQTIQPGLSEIKEIKGELANVKKRKRRSKKINKLTDGQIRINHVSSEKKRRELERAIFDELVAVVPDLQPQESRSELIIYLKSLSYLSWLYERNEKLRKQIIAKHEAKTGSSSSSDPVQEQNGNIRDLVPKELIWELGDGQSGQ.

The region spanning 45-97 is the bHLH domain; the sequence is QIRINHVSSEKKRRELERAIFDELVAVVPDLQPQESRSELIIYLKSLSYLSWL. Positions 112 to 137 are disordered; the sequence is HEAKTGSSSSSDPVQEQNGNIRDLVP. Residues 116 to 131 show a composition bias toward polar residues; the sequence is TGSSSSSDPVQEQNGN.

In terms of assembly, efficient DNA binding requires dimerization with another bHLH protein.

The protein localises to the nucleus. Transcriptional activator of phospholipid synthetic genes (such as INO1, CHO1/PSS, CHO2/PEM1, OPI3/PEM2, etc.). The chain is Protein INO4 (INO4) from Saccharomyces cerevisiae (strain ATCC 204508 / S288c) (Baker's yeast).